A 968-amino-acid chain; its full sequence is Isoleucine--tRNA ligase (968 aa).

The 'HIGH' region signature appears at 68–78; the sequence is PYANGALHMGH. Glu582 contacts L-isoleucyl-5'-AMP. The 'KMSKS' region motif lies at 623 to 627; the sequence is KMSKS. Residue Lys626 participates in ATP binding. The Zn(2+) site is built by Cys936, Cys939, Cys956, and Cys959.

It belongs to the class-I aminoacyl-tRNA synthetase family. IleS type 1 subfamily. Monomer. Zn(2+) serves as cofactor.

It is found in the cytoplasm. It carries out the reaction tRNA(Ile) + L-isoleucine + ATP = L-isoleucyl-tRNA(Ile) + AMP + diphosphate. In terms of biological role, catalyzes the attachment of isoleucine to tRNA(Ile). As IleRS can inadvertently accommodate and process structurally similar amino acids such as valine, to avoid such errors it has two additional distinct tRNA(Ile)-dependent editing activities. One activity is designated as 'pretransfer' editing and involves the hydrolysis of activated Val-AMP. The other activity is designated 'posttransfer' editing and involves deacylation of mischarged Val-tRNA(Ile). In Prochlorococcus marinus (strain MIT 9312), this protein is Isoleucine--tRNA ligase.